A 121-amino-acid chain; its full sequence is Large ribosomal subunit protein uL14 (121 aa).

Belongs to the universal ribosomal protein uL14 family. Part of the 50S ribosomal subunit. Forms a cluster with proteins L3 and L19. In the 70S ribosome, L14 and L19 interact and together make contacts with the 16S rRNA in bridges B5 and B8.

Functionally, binds to 23S rRNA. Forms part of two intersubunit bridges in the 70S ribosome. This is Large ribosomal subunit protein uL14 from Synechococcus elongatus (strain ATCC 33912 / PCC 7942 / FACHB-805) (Anacystis nidulans R2).